We begin with the raw amino-acid sequence, 522 residues long: 2-isopropylmalate synthase (522 aa).

Positions 5-267 (VIIFDTTLRD…ETGINAKEIH (263 aa)) constitute a Pyruvate carboxyltransferase domain. Mn(2+) is bound by residues Asp-14, His-202, His-204, and Asn-238. The interval 392-522 (QLQQLVVQSD…MQKNRELGGV (131 aa)) is regulatory domain.

This sequence belongs to the alpha-IPM synthase/homocitrate synthase family. LeuA type 1 subfamily. As to quaternary structure, homodimer. It depends on Mn(2+) as a cofactor.

The protein localises to the cytoplasm. It catalyses the reaction 3-methyl-2-oxobutanoate + acetyl-CoA + H2O = (2S)-2-isopropylmalate + CoA + H(+). It functions in the pathway amino-acid biosynthesis; L-leucine biosynthesis; L-leucine from 3-methyl-2-oxobutanoate: step 1/4. In terms of biological role, catalyzes the condensation of the acetyl group of acetyl-CoA with 3-methyl-2-oxobutanoate (2-ketoisovalerate) to form 3-carboxy-3-hydroxy-4-methylpentanoate (2-isopropylmalate). This is 2-isopropylmalate synthase from Shewanella baltica (strain OS223).